Consider the following 324-residue polypeptide: ATP-dependent 6-phosphofructokinase (324 aa).

G15 is a binding site for ATP. Residue 25–29 coordinates ADP; the sequence is RGVVR. ATP-binding positions include 76 to 77 and 106 to 109; these read RF and GDGS. D107 is a Mg(2+) binding site. 130–132 is a binding site for substrate; sequence TID. D132 (proton acceptor) is an active-site residue. Position 159 (R159) interacts with ADP. Substrate is bound by residues R167 and 174–176; that span reads MGR. Residues 190-192, K216, and 218-220 contribute to the ADP site; these read GCE and KRH. Substrate contacts are provided by residues E227, R248, and 254-257; that span reads HIQR.

It belongs to the phosphofructokinase type A (PFKA) family. ATP-dependent PFK group I subfamily. Prokaryotic clade 'B1' sub-subfamily. Homotetramer. Mg(2+) serves as cofactor.

The protein localises to the cytoplasm. The catalysed reaction is beta-D-fructose 6-phosphate + ATP = beta-D-fructose 1,6-bisphosphate + ADP + H(+). Its pathway is carbohydrate degradation; glycolysis; D-glyceraldehyde 3-phosphate and glycerone phosphate from D-glucose: step 3/4. Its activity is regulated as follows. Allosterically activated by ADP and other diphosphonucleosides, and allosterically inhibited by phosphoenolpyruvate. Functionally, catalyzes the phosphorylation of D-fructose 6-phosphate to fructose 1,6-bisphosphate by ATP, the first committing step of glycolysis. In Actinobacillus pleuropneumoniae serotype 5b (strain L20), this protein is ATP-dependent 6-phosphofructokinase.